Here is a 465-residue protein sequence, read N- to C-terminus: Glutamate--tRNA ligase (465 aa).

Residues 11–21 (PSPTGYLHIGG) carry the 'HIGH' region motif. The short motif at 243–247 (KLSKR) is the 'KMSKS' region element. Lys246 contacts ATP.

Belongs to the class-I aminoacyl-tRNA synthetase family. Glutamate--tRNA ligase type 1 subfamily. As to quaternary structure, monomer.

Its subcellular location is the cytoplasm. The enzyme catalyses tRNA(Glu) + L-glutamate + ATP = L-glutamyl-tRNA(Glu) + AMP + diphosphate. Functionally, catalyzes the attachment of glutamate to tRNA(Glu) in a two-step reaction: glutamate is first activated by ATP to form Glu-AMP and then transferred to the acceptor end of tRNA(Glu). This is Glutamate--tRNA ligase from Aromatoleum aromaticum (strain DSM 19018 / LMG 30748 / EbN1) (Azoarcus sp. (strain EbN1)).